A 156-amino-acid polypeptide reads, in one-letter code: Dihydrofolate reductase (156 aa).

In terms of domain architecture, DHFR spans 1-156; it reads MLKLIWCQTL…VNYYSNKKEK (156 aa).

This sequence belongs to the dihydrofolate reductase family.

It catalyses the reaction (6S)-5,6,7,8-tetrahydrofolate + NADP(+) = 7,8-dihydrofolate + NADPH + H(+). It functions in the pathway cofactor biosynthesis; tetrahydrofolate biosynthesis; 5,6,7,8-tetrahydrofolate from 7,8-dihydrofolate: step 1/1. Functionally, key enzyme in folate metabolism. Catalyzes an essential reaction for de novo glycine and purine synthesis, and for DNA precursor synthesis. The polypeptide is Dihydrofolate reductase (folA) (Ureaplasma parvum serovar 3 (strain ATCC 700970)).